Here is a 557-residue protein sequence, read N- to C-terminus: Urocanate hydratase (557 aa).

NAD(+) is bound by residues 53–54 (GG), Q131, 177–179 (GMG), E197, R202, 243–244 (NA), 264–268 (QTSAH), 274–275 (YL), and Y323. C411 is an active-site residue. The tract at residues 445-464 (LDSGSVSSPNRETESMRDGS) is disordered. Residues 455–464 (RETESMRDGS) show a composition bias toward basic and acidic residues. NAD(+) is bound at residue G493.

The protein belongs to the urocanase family. Requires NAD(+) as cofactor.

It is found in the cytoplasm. The enzyme catalyses 4-imidazolone-5-propanoate = trans-urocanate + H2O. It functions in the pathway amino-acid degradation; L-histidine degradation into L-glutamate; N-formimidoyl-L-glutamate from L-histidine: step 2/3. Its function is as follows. Catalyzes the conversion of urocanate to 4-imidazolone-5-propionate. This is Urocanate hydratase from Pseudomonas putida (strain W619).